The sequence spans 168 residues: G/U mismatch-specific DNA glycosylase (168 aa).

This sequence belongs to the uracil-DNA glycosylase (UDG) superfamily. TDG/mug family. Binds DNA as a monomer.

It is found in the cytoplasm. The enzyme catalyses Specifically hydrolyzes mismatched double-stranded DNA and polynucleotides, releasing free uracil.. Functionally, excises ethenocytosine and uracil, which can arise by alkylation or deamination of cytosine, respectively, from the corresponding mispairs with guanine in ds-DNA. It is capable of hydrolyzing the carbon-nitrogen bond between the sugar-phosphate backbone of the DNA and the mispaired base. The complementary strand guanine functions in substrate recognition. Required for DNA damage lesion repair in stationary-phase cells. The sequence is that of G/U mismatch-specific DNA glycosylase from Klebsiella pneumoniae (strain 342).